The primary structure comprises 337 residues: Phosphate acyltransferase (337 aa).

It belongs to the PlsX family. As to quaternary structure, homodimer. Probably interacts with PlsY.

The protein resides in the cytoplasm. It carries out the reaction a fatty acyl-[ACP] + phosphate = an acyl phosphate + holo-[ACP]. The protein operates within lipid metabolism; phospholipid metabolism. Catalyzes the reversible formation of acyl-phosphate (acyl-PO(4)) from acyl-[acyl-carrier-protein] (acyl-ACP). This enzyme utilizes acyl-ACP as fatty acyl donor, but not acyl-CoA. The protein is Phosphate acyltransferase of Aquifex aeolicus (strain VF5).